We begin with the raw amino-acid sequence, 394 residues long: MNPLATLEQGLADIDAQGLRRCRRVADTACGAHMTVDGRAIIGFASNDYLGLAAHPRLVEAFAEGARRYGSGSGGSHLLGGHSRAHATLEDQLAAFSGGFSDAPRALYFSTGYMANLAALTALAGRGATIFSDALNHASLIDGARLSRANVQIYPHGDADALDARLRACDAPTKLIVSDTVFSMDGDVAPLARLVALAETHGAWLVVDDAHGFGVLGPQGRGALAAHGLRSPNLVYVGTLGKAAGVAGAFVVAHETVIEWLVQRARSYIFTTAAPPSVACAVSASLAVIASDEGDARRAHLGALIKRTRAILRATHWQPVDSHTAVQPLVIGSNEATLAAMAALDAQGLWVPAIRPPTVPAGTSRLRISLSAAHSFDDLARLEAALVTPIGAAA.

Position 21 (Arg21) interacts with substrate. Position 112–113 (112–113 (GY)) interacts with pyridoxal 5'-phosphate. His137 contributes to the substrate binding site. The pyridoxal 5'-phosphate site is built by Ser183, His211, and Thr239. Position 242 is an N6-(pyridoxal phosphate)lysine (Lys242). Residue Thr358 participates in substrate binding.

The protein belongs to the class-II pyridoxal-phosphate-dependent aminotransferase family. BioF subfamily. Homodimer. Requires pyridoxal 5'-phosphate as cofactor.

It carries out the reaction 6-carboxyhexanoyl-[ACP] + L-alanine + H(+) = (8S)-8-amino-7-oxononanoate + holo-[ACP] + CO2. The protein operates within cofactor biosynthesis; biotin biosynthesis. In terms of biological role, catalyzes the decarboxylative condensation of pimeloyl-[acyl-carrier protein] and L-alanine to produce 8-amino-7-oxononanoate (AON), [acyl-carrier protein], and carbon dioxide. This is 8-amino-7-oxononanoate synthase from Burkholderia pseudomallei (strain 1710b).